The primary structure comprises 63 residues: Period circadian protein (63 aa).

The disordered stretch occupies residues 1 to 63 (EGSGGSGSSG…VTLTESLLNK (63 aa)). Low complexity-rich tracts occupy residues 9–31 (SGNFTTGSNVRMSSVTNTSNAGT) and 39–49 (SAAASGASVNA). Positions 54 to 63 (VTLTESLLNK) are enriched in polar residues.

As to quaternary structure, forms a heterodimer with timeless (TIM); the complex then translocates into the nucleus. Phosphorylated with a circadian rhythmicity, probably by the double-time protein (dbt). Phosphorylation could be implicated in the stability of per monomer and in the formation of heterodimer per-tim.

Its subcellular location is the nucleus. The protein resides in the cytoplasm. The protein localises to the perinuclear region. Its function is as follows. Essential for biological clock functions. Determines the period length of circadian and ultradian rhythms; an increase in PER dosage leads to shortened circadian rhythms and a decrease leads to lengthened circadian rhythms. Essential for the circadian rhythmicity of locomotor activity, eclosion behavior, and for the rhythmic component of the male courtship song that originates in the thoracic nervous system. The biological cycle depends on the rhythmic formation and nuclear localization of the TIM-PER complex. Light induces the degradation of TIM, which promotes elimination of PER. Nuclear activity of the heterodimer coordinatively regulates PER and TIM transcription through a negative feedback loop. Behaves as a negative element in circadian transcriptional loop. Does not appear to bind DNA, suggesting indirect transcriptional inhibition. In Drosophila immigrans (Fruit fly), this protein is Period circadian protein (per).